The primary structure comprises 166 residues: Large ribosomal subunit protein uL10 (166 aa).

Belongs to the universal ribosomal protein uL10 family. As to quaternary structure, part of the ribosomal stalk of the 50S ribosomal subunit. The N-terminus interacts with L11 and the large rRNA to form the base of the stalk. The C-terminus forms an elongated spine to which L12 dimers bind in a sequential fashion forming a multimeric L10(L12)X complex.

Its function is as follows. Forms part of the ribosomal stalk, playing a central role in the interaction of the ribosome with GTP-bound translation factors. This chain is Large ribosomal subunit protein uL10, found in Aeromonas salmonicida (strain A449).